Consider the following 255-residue polypeptide: NAD-dependent protein deacylase (255 aa).

The region spanning 1 to 252 is the Deacetylase sirtuin-type domain; sequence MPKLVVFSGA…AEIEQELEQF (252 aa). NAD(+) is bound at residue 9–28; sequence GAGLSAESGLETFRDNGGLW. Residues tyrosine 53 and arginine 56 each coordinate substrate. Residue 103-106 coordinates NAD(+); the sequence is QNVD. The active-site Proton acceptor is the histidine 121. 4 residues coordinate Zn(2+): cysteine 129, cysteine 132, cysteine 148, and cysteine 151. NAD(+) contacts are provided by residues 190–192, 218–220, and threonine 238; these read GTS and NLQ.

The protein belongs to the sirtuin family. Class III subfamily. Zn(2+) serves as cofactor.

The protein localises to the cytoplasm. The enzyme catalyses N(6)-acetyl-L-lysyl-[protein] + NAD(+) + H2O = 2''-O-acetyl-ADP-D-ribose + nicotinamide + L-lysyl-[protein]. It carries out the reaction N(6)-succinyl-L-lysyl-[protein] + NAD(+) + H2O = 2''-O-succinyl-ADP-D-ribose + nicotinamide + L-lysyl-[protein]. Functionally, NAD-dependent lysine deacetylase and desuccinylase that specifically removes acetyl and succinyl groups on target proteins. Modulates the activities of several proteins which are inactive in their acylated form. This is NAD-dependent protein deacylase from Helicobacter hepaticus (strain ATCC 51449 / 3B1).